Here is a 227-residue protein sequence, read N- to C-terminus: Ribose-5-phosphate isomerase A (227 aa).

Residues 28-31 (TGST), 85-88 (DGAD), and 98-101 (KGGG) each bind substrate. The active-site Proton acceptor is the glutamate 107. Position 125 (lysine 125) interacts with substrate.

This sequence belongs to the ribose 5-phosphate isomerase family. As to quaternary structure, homodimer.

It carries out the reaction aldehydo-D-ribose 5-phosphate = D-ribulose 5-phosphate. It participates in carbohydrate degradation; pentose phosphate pathway; D-ribose 5-phosphate from D-ribulose 5-phosphate (non-oxidative stage): step 1/1. Its function is as follows. Catalyzes the reversible conversion of ribose-5-phosphate to ribulose 5-phosphate. The chain is Ribose-5-phosphate isomerase A from Limosilactobacillus reuteri (strain DSM 20016) (Lactobacillus reuteri).